Reading from the N-terminus, the 500-residue chain is Lysine--tRNA ligase (500 aa).

The Mg(2+) site is built by Glu-402 and Glu-409.

Belongs to the class-II aminoacyl-tRNA synthetase family. As to quaternary structure, homodimer. It depends on Mg(2+) as a cofactor.

The protein localises to the cytoplasm. The enzyme catalyses tRNA(Lys) + L-lysine + ATP = L-lysyl-tRNA(Lys) + AMP + diphosphate. This is Lysine--tRNA ligase from Buchnera aphidicola subsp. Baizongia pistaciae (strain Bp).